A 412-amino-acid polypeptide reads, in one-letter code: Class E basic helix-loop-helix protein 40 (412 aa).

The segment at 1-21 is disordered; sequence MERIPSAQPPPTCLPKAPGLE. Residues 1 to 139 form an essential for interaction with BMAL1, E-box binding and repressor activity against the CLOCK-BMAL1 heterodimer region; sequence MERIPSAQPP…LSGRNVEAGQ (139 aa). The region spanning 52–107 is the bHLH domain; it reads TYKLPHRLIEKKRRDRINECIAQLKDLLPEHLKLTTLGHLEKAVVLELTLKHVKAL. The necessary for interaction with RXRA and repressor activity against RXRA stretch occupies residues 75–79; the sequence is LKDLL. The Orange domain maps to 142–175; the sequence is FCSGFQTCAREVLQYLAKHENTRDLKSSQLVTHL. Residue K159 forms a Glycyl lysine isopeptide (Lys-Gly) (interchain with G-Cter in SUMO1, SUMO2 and SUMO3) linkage. Residue K167 forms a Glycyl lysine isopeptide (Lys-Gly) (interchain with G-Cter in SUMO2) linkage. 2 disordered regions span residues 182-257 and 279-298; these read LLQG…LRVE and KQESEEPPMKKSRMQLSDDE. S235 is modified (phosphoserine). Residues 248–257 are compositionally biased toward basic and acidic residues; sequence ESEKSELRVE. K279 is covalently cross-linked (Glycyl lysine isopeptide (Lys-Gly) (interchain with G-Cter in SUMO1); alternate). A Glycyl lysine isopeptide (Lys-Gly) (interchain with G-Cter in SUMO1, SUMO2 and SUMO3); alternate cross-link involves residue K279. Residue K279 forms a Glycyl lysine isopeptide (Lys-Gly) (interchain with G-Cter in SUMO2); alternate linkage. Residue K288 forms a Glycyl lysine isopeptide (Lys-Gly) (interchain with G-Cter in SUMO2) linkage. S383 bears the Phosphoserine mark.

In terms of assembly, homodimer. Heterodimer with BHLHE41/DEC2. Interacts with TCF3/E47. Interacts with ubiquitin-conjugating enzyme UBE2I/UBC9. Interacts with HDAC1, SUMO1, RXRA and BMAL1. Ubiquitinated; which may lead to proteasomal degradation. Post-translationally, sumoylation inhibits its ubiquitination and promotes its negative regulation of the CLOCK-BMAL1 heterodimer transcriptional activator activity.

The protein resides in the cytoplasm. The protein localises to the nucleus. In terms of biological role, transcriptional repressor involved in the regulation of the circadian rhythm by negatively regulating the activity of the clock genes and clock-controlled genes. Acts as the negative limb of a novel autoregulatory feedback loop (DEC loop) which differs from the one formed by the PER and CRY transcriptional repressors (PER/CRY loop). Both these loops are interlocked as it represses the expression of PER1/2 and in turn is repressed by PER1/2 and CRY1/2. Represses the activity of the circadian transcriptional activator: CLOCK-BMAL1|BMAL2 heterodimer by competing for the binding to E-box elements (5'-CACGTG-3') found within the promoters of its target genes. Negatively regulates its own expression and the expression of DBP and BHLHE41/DEC2. Acts as a corepressor of RXR and the RXR-LXR heterodimers and represses the ligand-induced RXRA and NR1H3/LXRA transactivation activity. May be involved in the regulation of chondrocyte differentiation via the cAMP pathway. Represses the transcription of NR0B2 and attentuates the transactivation of NR0B2 by the CLOCK-BMAL1 complex. Drives the circadian rhythm of blood pressure through transcriptional repression of ATP1B1 in the cardiovascular system. This chain is Class E basic helix-loop-helix protein 40 (BHLHE40), found in Ovis aries (Sheep).